The primary structure comprises 372 residues: tRNA-specific 2-thiouridylase MnmA (372 aa).

ATP contacts are provided by residues 16–23 and M42; that span reads GMSGGVDS. The interval 102 to 104 is interaction with target base in tRNA; sequence NPD. The active-site Nucleophile is C107. C107 and C205 are oxidised to a cystine. An ATP-binding site is contributed by G132. Residues 155–157 are interaction with tRNA; the sequence is KDQ. The Cysteine persulfide intermediate role is filled by C205. Positions 317–318 are interaction with tRNA; it reads RY.

It belongs to the MnmA/TRMU family.

The protein resides in the cytoplasm. The enzyme catalyses S-sulfanyl-L-cysteinyl-[protein] + uridine(34) in tRNA + AH2 + ATP = 2-thiouridine(34) in tRNA + L-cysteinyl-[protein] + A + AMP + diphosphate + H(+). Functionally, catalyzes the 2-thiolation of uridine at the wobble position (U34) of tRNA, leading to the formation of s(2)U34. The sequence is that of tRNA-specific 2-thiouridylase MnmA from Shewanella sp. (strain MR-4).